The sequence spans 238 residues: UDP-2,3-diacylglucosamine hydrolase (238 aa).

Mn(2+)-binding residues include aspartate 8, histidine 10, aspartate 41, asparagine 78, and histidine 113. 78-79 contributes to the substrate binding site; that stretch reads NR. Substrate contacts are provided by aspartate 121, serine 159, asparagine 163, lysine 166, and histidine 194. Residues histidine 194 and histidine 196 each coordinate Mn(2+).

The protein belongs to the LpxH family. The cofactor is Mn(2+).

It is found in the cell inner membrane. It carries out the reaction UDP-2-N,3-O-bis[(3R)-3-hydroxytetradecanoyl]-alpha-D-glucosamine + H2O = 2-N,3-O-bis[(3R)-3-hydroxytetradecanoyl]-alpha-D-glucosaminyl 1-phosphate + UMP + 2 H(+). It functions in the pathway glycolipid biosynthesis; lipid IV(A) biosynthesis; lipid IV(A) from (3R)-3-hydroxytetradecanoyl-[acyl-carrier-protein] and UDP-N-acetyl-alpha-D-glucosamine: step 4/6. Functionally, hydrolyzes the pyrophosphate bond of UDP-2,3-diacylglucosamine to yield 2,3-diacylglucosamine 1-phosphate (lipid X) and UMP by catalyzing the attack of water at the alpha-P atom. Involved in the biosynthesis of lipid A, a phosphorylated glycolipid that anchors the lipopolysaccharide to the outer membrane of the cell. The protein is UDP-2,3-diacylglucosamine hydrolase of Shewanella pealeana (strain ATCC 700345 / ANG-SQ1).